The chain runs to 580 residues: Probable inactive 1-aminocyclopropane-1-carboxylate synthase-like protein 2 (580 aa).

Residues 1–43 (MSENRNEGSSQAAKANSDTQTPSHFKVTHPRLRDQLKKKSSKK) form a disordered region. Residues 7 to 23 (EGSSQAAKANSDTQTPS) are compositionally biased toward polar residues. Lys417 carries the N6-(pyridoxal phosphate)lysine modification.

The protein belongs to the class-I pyridoxal-phosphate-dependent aminotransferase family.

The polypeptide is Probable inactive 1-aminocyclopropane-1-carboxylate synthase-like protein 2 (Accsl) (Mus musculus (Mouse)).